A 400-amino-acid chain; its full sequence is Phosphoglycerate kinase (400 aa).

Residues 24-26 (DFN), R39, 62-65 (HLGK), R123, and R156 each bind substrate. ATP-binding positions include K207, G298, E329, and 356 to 359 (GGDS).

Belongs to the phosphoglycerate kinase family. In terms of assembly, monomer.

It is found in the cytoplasm. The enzyme catalyses (2R)-3-phosphoglycerate + ATP = (2R)-3-phospho-glyceroyl phosphate + ADP. The protein operates within carbohydrate degradation; glycolysis; pyruvate from D-glyceraldehyde 3-phosphate: step 2/5. The protein is Phosphoglycerate kinase of Clostridioides difficile (strain 630) (Peptoclostridium difficile).